A 203-amino-acid polypeptide reads, in one-letter code: Dephospho-CoA kinase (203 aa).

A DPCK domain is found at 4–203 (VIGITGGIAT…EEGYIQSESE (200 aa)). An ATP-binding site is contributed by 12 to 17 (ATGKST).

The protein belongs to the CoaE family.

Its subcellular location is the cytoplasm. It carries out the reaction 3'-dephospho-CoA + ATP = ADP + CoA + H(+). It participates in cofactor biosynthesis; coenzyme A biosynthesis; CoA from (R)-pantothenate: step 5/5. Its function is as follows. Catalyzes the phosphorylation of the 3'-hydroxyl group of dephosphocoenzyme A to form coenzyme A. This is Dephospho-CoA kinase from Staphylococcus epidermidis (strain ATCC 12228 / FDA PCI 1200).